The primary structure comprises 64 residues: Large ribosomal subunit protein bL33 (64 aa).

Positions glutamate 16–arginine 25 are enriched in basic and acidic residues. The interval glutamate 16–arginine 39 is disordered.

The protein belongs to the bacterial ribosomal protein bL33 family.

This Prochlorococcus marinus (strain MIT 9515) protein is Large ribosomal subunit protein bL33.